Reading from the N-terminus, the 248-residue chain is Aliphatic sulfonates import ATP-binding protein SsuB 2 (248 aa).

Positions 14–230 (VRVESLVRSF…DHGHRRFGEI (217 aa)) constitute an ABC transporter domain. 46 to 53 (GRSGSGKS) serves as a coordination point for ATP.

This sequence belongs to the ABC transporter superfamily. Aliphatic sulfonates importer (TC 3.A.1.17.2) family. As to quaternary structure, the complex is composed of two ATP-binding proteins (SsuB), two transmembrane proteins (SsuC) and a solute-binding protein (SsuA).

Its subcellular location is the cell inner membrane. It carries out the reaction ATP + H2O + aliphatic sulfonate-[sulfonate-binding protein]Side 1 = ADP + phosphate + aliphatic sulfonateSide 2 + [sulfonate-binding protein]Side 1.. Its function is as follows. Part of the ABC transporter complex SsuABC involved in aliphatic sulfonates import. Responsible for energy coupling to the transport system. In Mesorhizobium japonicum (strain LMG 29417 / CECT 9101 / MAFF 303099) (Mesorhizobium loti (strain MAFF 303099)), this protein is Aliphatic sulfonates import ATP-binding protein SsuB 2.